Here is an 88-residue protein sequence, read N- to C-terminus: Small ribosomal subunit protein bS16 (88 aa).

It belongs to the bacterial ribosomal protein bS16 family.

This is Small ribosomal subunit protein bS16 from Mycoplasmopsis pulmonis (strain UAB CTIP) (Mycoplasma pulmonis).